A 74-amino-acid polypeptide reads, in one-letter code: Peptide ToAP4 (74 aa).

Residues 1–22 (MQIKHLITLFFLVLIVADQCSA) form the signal peptide. Lysine amide is present on lysine 39. Residues 40 to 74 (GGRRKREIAAQIEQYRDLQKREAELEELLDRLPMF) constitute a propeptide that is removed on maturation.

Belongs to the non-disulfide-bridged peptide (NDBP) superfamily. Short antimicrobial peptide (group 4) family. In terms of tissue distribution, expressed by the venom gland.

Its subcellular location is the secreted. Its function is as follows. Shows anti-inflammatory activities, since it decreases release of pro-inflammatory cytokines, and increases release of anti-inflammatory cytokines. Acts by blocking the Toll-like receptor 4 (TLR4). Also increases MHC-II expression in LPS-stimulated cells. Does not show antibacterial activity on Mycobacterium abscessus subsp. massiliense. Does not show antifungal activity. Has low hemolytic activity on human erythrocyte and low monocyte cytotoxicity. In vivo, does not induce immune cell migration. Helical wheel projections predict an amphipathic peptide with distinct hydrophobic and hydrophilic faces. This is Peptide ToAP4 from Tityus obscurus (Amazonian scorpion).